A 671-amino-acid polypeptide reads, in one-letter code: UvrABC system protein B (671 aa).

The 384-residue stretch at 31 to 414 (DGFEQGEKAQ…ELNQTDHKVE (384 aa)) folds into the Helicase ATP-binding domain. Residue 44–51 (GATGTGKT) coordinates ATP. Positions 97–120 (YYDYYQPEAYVPQSDTYIEKDSSI) match the Beta-hairpin motif. One can recognise a Helicase C-terminal domain in the interval 435–601 (QIDDLVGEVN…TIVKPIRDVI (167 aa)). The UVR domain occupies 630-665 (QNMIKTLTAQMQEAAKKLDFEEAANLRDAIMDLKKQ).

Belongs to the UvrB family. Forms a heterotetramer with UvrA during the search for lesions. Interacts with UvrC in an incision complex.

Its subcellular location is the cytoplasm. In terms of biological role, the UvrABC repair system catalyzes the recognition and processing of DNA lesions. A damage recognition complex composed of 2 UvrA and 2 UvrB subunits scans DNA for abnormalities. Upon binding of the UvrA(2)B(2) complex to a putative damaged site, the DNA wraps around one UvrB monomer. DNA wrap is dependent on ATP binding by UvrB and probably causes local melting of the DNA helix, facilitating insertion of UvrB beta-hairpin between the DNA strands. Then UvrB probes one DNA strand for the presence of a lesion. If a lesion is found the UvrA subunits dissociate and the UvrB-DNA preincision complex is formed. This complex is subsequently bound by UvrC and the second UvrB is released. If no lesion is found, the DNA wraps around the other UvrB subunit that will check the other stand for damage. In Lactobacillus johnsonii (strain CNCM I-12250 / La1 / NCC 533), this protein is UvrABC system protein B.